Consider the following 699-residue polypeptide: 4-alpha-glucanotransferase (699 aa).

The protein belongs to the disproportionating enzyme family.

The protein resides in the cytoplasm. It carries out the reaction Transfers a segment of a (1-&gt;4)-alpha-D-glucan to a new position in an acceptor, which may be glucose or a (1-&gt;4)-alpha-D-glucan.. The polypeptide is 4-alpha-glucanotransferase (malQ) (Haemophilus influenzae (strain ATCC 51907 / DSM 11121 / KW20 / Rd)).